A 179-amino-acid chain; its full sequence is Large ribosomal subunit protein uL5 (179 aa).

It belongs to the universal ribosomal protein uL5 family. As to quaternary structure, part of the 50S ribosomal subunit; part of the 5S rRNA/L5/L18/L25 subcomplex. Contacts the 5S rRNA and the P site tRNA. Forms a bridge to the 30S subunit in the 70S ribosome.

Its function is as follows. This is one of the proteins that bind and probably mediate the attachment of the 5S RNA into the large ribosomal subunit, where it forms part of the central protuberance. In the 70S ribosome it contacts protein S13 of the 30S subunit (bridge B1b), connecting the 2 subunits; this bridge is implicated in subunit movement. Contacts the P site tRNA; the 5S rRNA and some of its associated proteins might help stabilize positioning of ribosome-bound tRNAs. The polypeptide is Large ribosomal subunit protein uL5 (Rhodospirillum rubrum (strain ATCC 11170 / ATH 1.1.1 / DSM 467 / LMG 4362 / NCIMB 8255 / S1)).